The chain runs to 92 residues: Small ribosomal subunit protein uS19 (92 aa).

This sequence belongs to the universal ribosomal protein uS19 family.

Functionally, protein S19 forms a complex with S13 that binds strongly to the 16S ribosomal RNA. The sequence is that of Small ribosomal subunit protein uS19 from Jannaschia sp. (strain CCS1).